The primary structure comprises 154 residues: Interleukin-2 (154 aa).

The signal sequence occupies residues 1–20 (MYRMQLLSCIALSLALVTNS). Thr-23 is a glycosylation site (O-linked (GalNAc...) threonine). Cys-78 and Cys-126 are disulfide-bonded.

The protein belongs to the IL-2 family.

It is found in the secreted. Its function is as follows. Cytokine produced by activated CD4-positive helper T-cells and to a lesser extend activated CD8-positive T-cells and natural killer (NK) cells that plays pivotal roles in the immune response and tolerance. Binds to a receptor complex composed of either the high-affinity trimeric IL-2R (IL2RA/CD25, IL2RB/CD122 and IL2RG/CD132) or the low-affinity dimeric IL-2R (IL2RB and IL2RG). Interaction with the receptor leads to oligomerization and conformation changes in the IL-2R subunits resulting in downstream signaling starting with phosphorylation of JAK1 and JAK3. In turn, JAK1 and JAK3 phosphorylate the receptor to form a docking site leading to the phosphorylation of several substrates including STAT5. This process leads to activation of several pathways including STAT, phosphoinositide-3-kinase/PI3K and mitogen-activated protein kinase/MAPK pathways. Functions as a T-cell growth factor and can increase NK-cell cytolytic activity as well. Promotes strong proliferation of activated B-cells and subsequently immunoglobulin production. Plays a pivotal role in regulating the adaptive immune system by controlling the survival and proliferation of regulatory T-cells, which are required for the maintenance of immune tolerance. Moreover, participates in the differentiation and homeostasis of effector T-cell subsets, including Th1, Th2, Th17 as well as memory CD8-positive T-cells. The polypeptide is Interleukin-2 (IL2) (Macaca mulatta (Rhesus macaque)).